Reading from the N-terminus, the 220-residue chain is Adenylate kinase (220 aa).

10-15 serves as a coordination point for ATP; it reads GAGKGT. The segment at 30–59 is NMP; it reads STGDMLRAAVKAGTPLGVEAKGYMDAGKLV. Residues Thr-31, Arg-36, 57-59, 85-88, and Gln-92 each bind AMP; these read KLV and GFPR. The segment at 122–159 is LID; sequence GRRTHPASGRTYHVKFNPPKVEGHDDVTGEPLIQRDDD. ATP-binding positions include Arg-123 and 132-133; that span reads TY. Arg-156 and Arg-167 together coordinate AMP. Gly-206 provides a ligand contact to ATP.

Belongs to the adenylate kinase family. As to quaternary structure, monomer.

Its subcellular location is the cytoplasm. It carries out the reaction AMP + ATP = 2 ADP. It participates in purine metabolism; AMP biosynthesis via salvage pathway; AMP from ADP: step 1/1. Catalyzes the reversible transfer of the terminal phosphate group between ATP and AMP. Plays an important role in cellular energy homeostasis and in adenine nucleotide metabolism. The polypeptide is Adenylate kinase (Burkholderia lata (strain ATCC 17760 / DSM 23089 / LMG 22485 / NCIMB 9086 / R18194 / 383)).